The following is a 248-amino-acid chain: mRNA-decapping protein OPG122 (248 aa).

Residues 45–227 form the Nudix hydrolase domain; that stretch reads HKRVSVSAIL…IAKYALDTAK (183 aa). Positions 125 to 147 match the Nudix box motif; that stretch reads GGILKRGENVPECLSREIKEEVN. Glu-132 lines the Mg(2+) pocket. The active-site Nucleophile is the Glu-141. Residue Glu-145 coordinates Mn(2+). Asp-167 lines the Mg(2+) pocket.

Belongs to the Nudix hydrolase family. It depends on Mg(2+) as a cofactor. Mn(2+) serves as cofactor.

It localises to the host mitochondrion. In terms of biological role, decapping enzyme that remove the protective 5'-cap from both host and viral mRNAs to commit transcripts for decay by the cellular exonuclease XRN1. Preferentially targets spliced mRNAs and since all viral genes are intronless, it preferentially targets host over viral transcripts. Acceleration of the turnover of cellular transcripts promotes the shutoff of host protein synthesis and therefore diminish the magnitude of antiviral response. The chain is mRNA-decapping protein OPG122 (OPG122) from Variola virus (isolate Human/India/Ind3/1967) (VARV).